The chain runs to 81 residues: Trefoil factor 3 (81 aa).

The first 23 residues, M1–G23, serve as a signal peptide directing secretion. The 44-residue stretch at N31 to L74 folds into the P-type domain. Disulfide bonds link C33-C59, C43-C58, and C53-C70.

In terms of assembly, monomer. Homodimer; disulfide-linked.

It is found in the secreted. Its subcellular location is the extracellular space. It localises to the extracellular matrix. The protein resides in the cytoplasm. Involved in the maintenance and repair of the intestinal mucosa. Promotes the mobility of epithelial cells in healing processes (motogen). This is Trefoil factor 3 (TFF3) from Bos taurus (Bovine).